The sequence spans 363 residues: Protein-arginine kinase (363 aa).

Residues 24-255 (IVLSSRIRLA…QQLIAQERAA (232 aa)) form the Phosphagen kinase C-terminal domain. ATP is bound by residues 27 to 31 (SSRIR), His92, Arg126, 177 to 181 (RASVM), and 208 to 213 (RGTYGE). The short motif at 338–343 (RDVRRA) is the RDXXRA motif of the pArg binding pocket involved in allosteric regulation element.

Belongs to the ATP:guanido phosphotransferase family.

The enzyme catalyses L-arginyl-[protein] + ATP = N(omega)-phospho-L-arginyl-[protein] + ADP + H(+). With respect to regulation, appears to be allosterically activated by the binding of pArg-containing polypeptides to the pArg-binding pocket localized in the C-terminal domain of McsB. Catalyzes the specific phosphorylation of arginine residues in a large number of proteins. Is part of the bacterial stress response system. Protein arginine phosphorylation has a physiologically important role and is involved in the regulation of many critical cellular processes, such as protein homeostasis, motility, competence, and stringent and stress responses, by regulating gene expression and protein activity. The polypeptide is Protein-arginine kinase (Geobacillus thermodenitrificans (strain NG80-2)).